Consider the following 107-residue polypeptide: Replication initiation control protein YabA (107 aa).

H80, C82, C97, and C100 together coordinate Zn(2+).

The protein belongs to the YabA family. Homotetramer. Interacts with both DnaA and DnaN, acting as a bridge between these two proteins. It depends on Zn(2+) as a cofactor.

Its subcellular location is the cytoplasm. The protein localises to the nucleoid. In terms of biological role, involved in control of chromosome replication initiation. Inhibits the cooperative binding of DnaA to the oriC region, thus negatively regulating initiation of chromosome replication. Inhibits the ability of DnaA-ATP to form a helix on DNA; does not disassemble preformed DnaA-DNA helices. Decreases the residence time of DnaA on the chromosome at its binding sites (oriC, replication forks and promoter-binding sites). Tethers DnaA to the replication machinery via the DNA polymerase beta sliding clamp subunit (dnaN). Associates with oriC and other DnaA targets on the chromosome in a DnaA-dependent manner. The sequence is that of Replication initiation control protein YabA from Streptococcus gordonii (strain Challis / ATCC 35105 / BCRC 15272 / CH1 / DL1 / V288).